The primary structure comprises 305 residues: Large ribosomal subunit protein uL3c (305 aa).

The transit peptide at 1-84 (MAAILPTFSI…AVGGLEIKMM (84 aa)) directs the protein to the chloroplast. Residues 228–256 (SHRALGSIGAGTTPGHVYKGKKMPGRMGG) are disordered.

As to quaternary structure, component of the chloroplast large ribosomal subunit (LSU). Mature 70S chloroplast ribosomes of higher plants consist of a small (30S) and a large (50S) subunit. The 30S small subunit contains 1 molecule of ribosomal RNA (16S rRNA) and 24 different proteins. The 50S large subunit contains 3 rRNA molecules (23S, 5S and 4.5S rRNA) and 33 different proteins.

It localises to the plastid. It is found in the chloroplast. Functionally, component of the chloroplast ribosome (chloro-ribosome), a dedicated translation machinery responsible for the synthesis of chloroplast genome-encoded proteins, including proteins of the transcription and translation machinery and components of the photosynthetic apparatus. In Spinacia oleracea (Spinach), this protein is Large ribosomal subunit protein uL3c (RPL3).